The sequence spans 145 residues: Snaclec salmorin subunit B (145 aa).

The first 23 residues, 1-23 (MGRFIFVSFGLLVVFVSLSGTGA), serve as a signal peptide directing secretion. Intrachain disulfides connect cysteine 25/cysteine 36, cysteine 53/cysteine 141, and cysteine 118/cysteine 133. Residues 32–142 (YEGHCYKLFN…CRMEAYFVCE (111 aa)) form the C-type lectin domain. Residues serine 64 and glutamate 70 each coordinate Ca(2+). Glutamate 142 is a binding site for Ca(2+).

This sequence belongs to the snaclec family. As to quaternary structure, heterodimer of subunits A and B; disulfide-linked. In terms of tissue distribution, expressed by the venom gland.

Its subcellular location is the secreted. Inhibits thrombin-induced fibrinogen clotting and factor Xa-induced prothrombin activation. Binds to thrombin and prothrombin exosites. The protein is Snaclec salmorin subunit B of Gloydius brevicauda (Korean slamosa snake).